The following is a 118-amino-acid chain: Large ribosomal subunit protein uL18 (118 aa).

Belongs to the universal ribosomal protein uL18 family. Part of the 50S ribosomal subunit; part of the 5S rRNA/L5/L18/L25 subcomplex. Contacts the 5S and 23S rRNAs.

Its function is as follows. This is one of the proteins that bind and probably mediate the attachment of the 5S RNA into the large ribosomal subunit, where it forms part of the central protuberance. This is Large ribosomal subunit protein uL18 from Dechloromonas aromatica (strain RCB).